Consider the following 337-residue polypeptide: Ketol-acid reductoisomerase (NADP(+)) (337 aa).

The KARI N-terminal Rossmann domain occupies I3–T183. NADP(+) is bound by residues Y26–Q29, R49, S52, S54, and D84–Q87. H109 is an active-site residue. NADP(+) is bound at residue G135. Residues T184–V329 form the KARI C-terminal knotted domain. Mg(2+)-binding residues include D192, E196, E228, and E232. A substrate-binding site is contributed by S253.

This sequence belongs to the ketol-acid reductoisomerase family. Mg(2+) serves as cofactor.

The enzyme catalyses (2R)-2,3-dihydroxy-3-methylbutanoate + NADP(+) = (2S)-2-acetolactate + NADPH + H(+). It catalyses the reaction (2R,3R)-2,3-dihydroxy-3-methylpentanoate + NADP(+) = (S)-2-ethyl-2-hydroxy-3-oxobutanoate + NADPH + H(+). The protein operates within amino-acid biosynthesis; L-isoleucine biosynthesis; L-isoleucine from 2-oxobutanoate: step 2/4. It functions in the pathway amino-acid biosynthesis; L-valine biosynthesis; L-valine from pyruvate: step 2/4. Involved in the biosynthesis of branched-chain amino acids (BCAA). Catalyzes an alkyl-migration followed by a ketol-acid reduction of (S)-2-acetolactate (S2AL) to yield (R)-2,3-dihydroxy-isovalerate. In the isomerase reaction, S2AL is rearranged via a Mg-dependent methyl migration to produce 3-hydroxy-3-methyl-2-ketobutyrate (HMKB). In the reductase reaction, this 2-ketoacid undergoes a metal-dependent reduction by NADPH to yield (R)-2,3-dihydroxy-isovalerate. This chain is Ketol-acid reductoisomerase (NADP(+)), found in Corynebacterium efficiens (strain DSM 44549 / YS-314 / AJ 12310 / JCM 11189 / NBRC 100395).